We begin with the raw amino-acid sequence, 378 residues long: IDS-type sesquiterpene synthase (378 aa).

Mg(2+)-binding residues include aspartate 120 and aspartate 124. The short motif at 120 to 124 (DDYVD) is the DDXXD motif element.

This sequence belongs to the terpene synthase family. It depends on Mg(2+) as a cofactor. As to expression, highly expressed in male epidermal tissue associated with the cuticle of ventral sternites.

It carries out the reaction (2Z,6E)-farnesyl diphosphate = (Z)-alpha-bisabolene + diphosphate. It functions in the pathway pheromone biosynthesis. Sesquiterpene alcohol synthase that catalyzes the formation of the pheromone precursor (Z)-alpha-bisabolene from (2Z,6E)-farnesyl diphosphate. The protein is IDS-type sesquiterpene synthase of Nezara viridula (Southern green stink bug).